A 122-amino-acid polypeptide reads, in one-letter code: Large ribosomal subunit protein uL14 (122 aa).

It belongs to the universal ribosomal protein uL14 family. Part of the 50S ribosomal subunit. Forms a cluster with proteins L3 and L19. In the 70S ribosome, L14 and L19 interact and together make contacts with the 16S rRNA in bridges B5 and B8.

Functionally, binds to 23S rRNA. Forms part of two intersubunit bridges in the 70S ribosome. The polypeptide is Large ribosomal subunit protein uL14 (Shewanella loihica (strain ATCC BAA-1088 / PV-4)).